Reading from the N-terminus, the 764-residue chain is 5-methyltetrahydropteroyltriglutamate--homocysteine methyltransferase (764 aa).

Residues Arg-16–Lys-19 and Lys-121 contribute to the 5-methyltetrahydropteroyltri-L-glutamate site. L-homocysteine contacts are provided by residues Ile-440 to Ser-442 and Glu-493. L-methionine is bound by residues Ile-440–Ser-442 and Glu-493. 5-methyltetrahydropteroyltri-L-glutamate-binding positions include Arg-524 to Cys-525 and Trp-570. Asp-608 is a binding site for L-homocysteine. Position 608 (Asp-608) interacts with L-methionine. Glu-614 serves as a coordination point for 5-methyltetrahydropteroyltri-L-glutamate. Residues His-650, Cys-652, and Glu-674 each contribute to the Zn(2+) site. His-703 (proton donor) is an active-site residue. Cys-735 contributes to the Zn(2+) binding site.

Belongs to the vitamin-B12 independent methionine synthase family. Zn(2+) serves as cofactor.

The enzyme catalyses 5-methyltetrahydropteroyltri-L-glutamate + L-homocysteine = tetrahydropteroyltri-L-glutamate + L-methionine. Its pathway is amino-acid biosynthesis; L-methionine biosynthesis via de novo pathway; L-methionine from L-homocysteine (MetE route): step 1/1. Its function is as follows. Catalyzes the transfer of a methyl group from 5-methyltetrahydrofolate to homocysteine resulting in methionine formation. This chain is 5-methyltetrahydropteroyltriglutamate--homocysteine methyltransferase, found in Burkholderia ambifaria (strain ATCC BAA-244 / DSM 16087 / CCUG 44356 / LMG 19182 / AMMD) (Burkholderia cepacia (strain AMMD)).